Consider the following 643-residue polypeptide: Versicolorin B synthase (643 aa).

A propeptide spanning residues 1 to 41 is cleaved from the precursor; the sequence is MGRNWFQVTAMAVVPVVGIMAAVNPTILSSAASSLPSLGAM. FAD-binding positions include 84-85 and 105-106; these read TA and EA. The N-linked (GlcNAc...) asparagine glycan is linked to N116. 171–174 contacts FAD; that stretch reads GAML. Residues N221 and N507 are each glycosylated (N-linked (GlcNAc...) asparagine). Residues A613 and 624–625 each bind FAD; that span reads PM.

It belongs to the GMC oxidoreductase family. In terms of assembly, homodimer. Requires FAD as cofactor. In terms of processing, N-glycosylated.

Its subcellular location is the cytoplasm. The protein localises to the cytosol. It catalyses the reaction (2S-3S)-versiconal hemiacetal = versicolorin B + H2O. It carries out the reaction (S)-5'-oxoaverantin + H(+) = (1'S,5'S)-averufin + H2O. It functions in the pathway mycotoxin biosynthesis; aflatoxin biosynthesis. Functionally, dual cyclase; part of the gene cluster that mediates the biosynthesis of aflatoxins, a group of polyketide-derived furanocoumarins, and part of the most toxic and carcinogenic compounds among the known mycotoxins. The four major aflatoxins produced by A.parasiticus are aflatoxin B1 (AFB1), aflatoxin B2 (AFB2), aflatoxin G1 (AFG1) and aflatoxin G2 (AFG2). Aflk plays a dual role within the aflatoxin pathway, as a 5'-oxoaverantin cyclase that mediates conversion of 5'-oxoaverantin (OAVN) to averufin (AVF), as well as a versicolorin B synthase that converts versiconal (VAL) to versicolorin B (VERB) by closing the bisfuran ring of aflatoxin which is required for DNA-binding, thus giving to aflatoxin its activity as a mutagen. The biosynthesis of aflatoxins begins with the norsolorinic acid synthase aflC that combines a hexanoyl starter unit produced by the fatty acid synthase aflA/aflB and 7 malonyl-CoA extender units to synthesize the precursor NOR. The second step is the conversion of NOR to averantin and requires the norsolorinic acid ketoreductase aflD, which catalyzes the dehydration of norsolorinic acid to form (1'S)-averantin. The norsolorinic acid reductases aflE and aflF may also play a role in the conversion of NOR to AVN. The cytochrome P450 monooxygenase aflG then catalyzes the hydroxylation of AVN to 5'hydroxyaverantin (HAVN). The next step is performed by the 5'-hydroxyaverantin dehydrogenase aflH that transforms HAVN to 5'-oxoaverantin (OAVN) which is further converted to averufin (AVF) by aflK that plays a dual role in the pathway, as a 5'-oxoaverantin cyclase that mediates conversion of 5'-oxoaverantin, as well as a versicolorin B synthase in a later step in the pathway. The averufin oxidase aflI catalyzes the conversion of AVF to versiconal hemiacetal acetate (VHA). VHA is then the substrate for the versiconal hemiacetal acetate esterase aflJ to yield versiconal (VAL). Versicolorin B synthase aflK then converts VAL to versicolorin B (VERB) by closing the bisfuran ring of aflatoxin which is required for DNA-binding, thus giving to aflatoxin its activity as a mutagen. Then, the activity of the versicolorin B desaturase aflL leads to versicolorin A (VERA). A branch point starts from VERB since it can also be converted to dihydrodemethylsterigmatocystin (DMDHST), probably also by aflL, VERA being a precursor for aflatoxins B1 and G1, and DMDHST for aflatoxins B2 and G2. Next, the versicolorin reductase aflM and the cytochrome P450 monooxygenase aflN are involved in conversion of VERA to demethylsterigmatocystin (DMST). AflX and aflY seem also involved in this step, through probable aflX-mediated epoxide ring-opening step following versicolorin A oxidation and aflY-mediated Baeyer-Villiger oxidation required for the formation of the xanthone ring. The methyltransferase aflO then leads to the modification of DMST to sterigmatocystin (ST), and of DMDHST to dihydrosterigmatocystin (DHST). Both ST and DHST are then substrates of the O-methyltransferase aflP to yield O-methylsterigmatocystin (OMST) and dihydro-O-methylsterigmatocystin (DHOMST), respectively. Finally OMST is converted to aflatoxins B1 and G1, and DHOMST to aflatoxins B2 and G2, via the action of several enzymes including O-methylsterigmatocystin oxidoreductase aflQ, the cytochrome P450 monooxygenase aflU, but also the NADH-dependent flavin oxidoreductase nadA which is specifically required for the synthesis of AFG1. The polypeptide is Versicolorin B synthase (Aspergillus parasiticus (strain ATCC 56775 / NRRL 5862 / SRRC 143 / SU-1)).